The following is a 124-amino-acid chain: uncharacterized protein (124 aa).

A helical membrane pass occupies residues Leu70–Ile90.

It is found in the membrane. This is an uncharacterized protein from Saccharomyces cerevisiae (strain ATCC 204508 / S288c) (Baker's yeast).